The following is a 531-amino-acid chain: Bifunctional protein TrpGD (531 aa).

In terms of domain architecture, Glutamine amidotransferase type-1 spans 3-196 (DILLLDNIDS…LAWAQQKLEP (194 aa)). 57–59 (GPG) contacts L-glutamine. The active-site Nucleophile; for GATase activity is Cys84. L-glutamine is bound by residues Gln88 and 134-135 (SL). Catalysis depends on for GATase activity residues His170 and Glu172. The interval 202–531 (PILEKLYQAQ…DRVTALAARG (330 aa)) is anthranilate phosphoribosyltransferase.

It in the C-terminal section; belongs to the anthranilate phosphoribosyltransferase family. As to quaternary structure, monomer. Heterotetramer consisting of two non-identical subunits: a beta subunit (TrpG) and a large alpha subunit (TrpE).

It catalyses the reaction chorismate + L-glutamine = anthranilate + pyruvate + L-glutamate + H(+). It carries out the reaction N-(5-phospho-beta-D-ribosyl)anthranilate + diphosphate = 5-phospho-alpha-D-ribose 1-diphosphate + anthranilate. Its pathway is amino-acid biosynthesis; L-tryptophan biosynthesis; L-tryptophan from chorismate: step 1/5. The protein operates within amino-acid biosynthesis; L-tryptophan biosynthesis; L-tryptophan from chorismate: step 2/5. Its activity is regulated as follows. Cooperatively feedback inhibited by tryptophan. Functionally, part of a heterotetrameric complex that catalyzes the two-step biosynthesis of anthranilate, an intermediate in the biosynthesis of L-tryptophan. In the first step, the glutamine-binding beta subunit (TrpG) of anthranilate synthase (AS) provides the glutamine amidotransferase activity which generates ammonia as a substrate that, along with chorismate, is used in the second step, catalyzed by the large alpha subunit of AS (TrpE) to produce anthranilate. In the absence of TrpG, TrpE can synthesize anthranilate directly from chorismate and high concentrations of ammonia. In addition to synthesizing anthranilate, it also catalyzes the second step of the pathway, the transfer of the phosphoribosyl group of 5-phosphorylribose-1-pyrophosphate (PRPP) to anthranilate. The chain is Bifunctional protein TrpGD (trpGD) from Salmonella typhimurium (strain LT2 / SGSC1412 / ATCC 700720).